Reading from the N-terminus, the 338-residue chain is MTDYTTDIAVIGAGPVGIFTVFQAGMLKMQCCVIDALTEVGGQCTALYPEKPIYDIPGYPIVSGKELIDNLKKQSEPFNPQYLLGQIAEKIEDYSDYFLIRTSKGIVIQSKVIVIAAGAGAFGPNRPPIDNILDYENKSVFYQVKNISDFHNKNIMIAGGGDSAADWAVELSKIASQLYIVHRRRNFRCAPNTALQIDNLSQNGKINVIVPYQIKKLLGEEGKLHSVVVQNITNHEEITLQVDYLFPFFGTSANLGSMLNWGIEIKGYQMTVDFETCRTSRDRIYAVGDIATYPGKVKLILTGFSEAAMACHHIYHIVYPNSPLNFQYSTSKGIPNKN.

The FAD site is built by aspartate 35, glutamine 43, tyrosine 48, alanine 88, phenylalanine 122, aspartate 289, and threonine 330.

The protein belongs to the ferredoxin--NADP reductase type 2 family. In terms of assembly, homodimer. It depends on FAD as a cofactor.

The catalysed reaction is 2 reduced [2Fe-2S]-[ferredoxin] + NADP(+) + H(+) = 2 oxidized [2Fe-2S]-[ferredoxin] + NADPH. The sequence is that of Ferredoxin--NADP reductase from Ehrlichia canis (strain Jake).